The chain runs to 120 residues: Succinate dehydrogenase membrane anchor subunit (120 aa).

Residues 1 to 17 (MTEKLLHFIRTKSGSMH) lie on the Mitochondrial matrix side of the membrane. Residues 18-38 (WWLQRFLAILLAPIILYLLFD) traverse the membrane as a helical segment. Over 39-63 (VAIYIGQQSDPTVMMFLNRIFNHNS) the chain is Mitochondrial intermembrane. The chain crosses the membrane as a helical span at residues 64 to 85 (IFIFITSVILIWHVRGGMEVII). His-76 provides a ligand contact to heme. Residues 86–95 (EDYVHGEKTR) lie on the Mitochondrial matrix side of the membrane. Tyr-88 contributes to the a ubiquinone binding site. A helical membrane pass occupies residues 96–120 (IVSIFLIRVIAIEIMEYLYKCSIIF).

Part of an enzyme complex containing four subunits: a flavoprotein, an iron-sulfur protein, plus two membrane-anchoring proteins. Requires heme as cofactor.

It is found in the mitochondrion inner membrane. It participates in carbohydrate metabolism; tricarboxylic acid cycle. Its function is as follows. Membrane-anchoring subunit of succinate dehydrogenase (SDH). The sequence is that of Succinate dehydrogenase membrane anchor subunit (SDH4) from Reclinomonas americana.